Reading from the N-terminus, the 709-residue chain is Polyribonucleotide nucleotidyltransferase (709 aa).

Positions 490 and 496 each coordinate Mg(2+). One can recognise a KH domain in the interval 557–616; it reads PKVITMRVLPEKIPVIIGPSGKNIKKIIDETGVKIDLDQEGLVRIYAVDGESADKAKEMI. The S1 motif domain maps to 626 to 694; it reads GEVYMGKVTR…EMGRAKVSLK (69 aa).

It belongs to the polyribonucleotide nucleotidyltransferase family. It depends on Mg(2+) as a cofactor.

Its subcellular location is the cytoplasm. The enzyme catalyses RNA(n+1) + phosphate = RNA(n) + a ribonucleoside 5'-diphosphate. Functionally, involved in mRNA degradation. Catalyzes the phosphorolysis of single-stranded polyribonucleotides processively in the 3'- to 5'-direction. The chain is Polyribonucleotide nucleotidyltransferase from Persephonella marina (strain DSM 14350 / EX-H1).